We begin with the raw amino-acid sequence, 400 residues long: Elongation factor Tu 1 (400 aa).

One can recognise a tr-type G domain in the interval 10-209 (KPHVNIGTIG…AVDEYIPTPQ (200 aa)). A G1 region spans residues 19–26 (GHVDHGKT). 19–26 (GHVDHGKT) lines the GTP pocket. Thr26 serves as a coordination point for Mg(2+). The segment at 60-64 (GITIN) is G2. The tract at residues 81–84 (DCPG) is G3. Residues 81 to 85 (DCPGH) and 136 to 139 (NKAD) each bind GTP. The segment at 136–139 (NKAD) is G4. Positions 174-176 (SAL) are G5.

The protein belongs to the TRAFAC class translation factor GTPase superfamily. Classic translation factor GTPase family. EF-Tu/EF-1A subfamily. As to quaternary structure, monomer.

It is found in the cytoplasm. The catalysed reaction is GTP + H2O = GDP + phosphate + H(+). In terms of biological role, GTP hydrolase that promotes the GTP-dependent binding of aminoacyl-tRNA to the A-site of ribosomes during protein biosynthesis. This chain is Elongation factor Tu 1, found in Pelotomaculum thermopropionicum (strain DSM 13744 / JCM 10971 / SI).